The primary structure comprises 1830 residues: Dedicator of cytokinesis protein 2 (1830 aa).

The SH3 domain occupies 8-69 (DKERHGVAIY…PKSFIHIKEV (62 aa)). At K304 the chain carries N6-acetyllysine. The 185-residue stretch at 423–607 (RNDIYITLLQ…DVFSISTLVC (185 aa)) folds into the C2 DOCK-type domain. Phosphoserine is present on residues S588 and S593. K738 carries the post-translational modification N6-acetyllysine. An interaction with CRKL region spans residues 939-1476 (CMTAILNQMG…TSFVTAYKLP (538 aa)). One can recognise a DOCKER domain in the interval 1211–1622 (YKDNNREEMY…VEKEYGVREM (412 aa)). A compositionally biased stretch (polar residues) spans 1651-1665 (MNSDCSTPSKPTSES). The segment at 1651 to 1704 (MNSDCSTPSKPTSESFDLELASPKTPRVEQEEPISPGSTLPEVKLRRSKKRTKR) is disordered. A phosphoserine mark is found at S1685, S1706, S1731, and S1784.

This sequence belongs to the DOCK family. As to quaternary structure, homodimer. Interacts with RAC1 and RAC2. Interacts with CRKL and VAV. Interacts with CD3Z. Specifically expressed in hematopoietic cells. Highly expressed in peripheral blood leukocytes, and expressed at intermediate level in thymus and spleen. Expressed at very low level in the small intestine and colon.

It is found in the endomembrane system. The protein resides in the cytoplasm. Its subcellular location is the cytoskeleton. Functionally, involved in cytoskeletal rearrangements required for lymphocyte migration in response of chemokines. Activates RAC1 and RAC2, but not CDC42, by functioning as a guanine nucleotide exchange factor (GEF), which exchanges bound GDP for free GTP. May also participate in IL2 transcriptional activation via the activation of RAC2. The chain is Dedicator of cytokinesis protein 2 (DOCK2) from Homo sapiens (Human).